The primary structure comprises 370 residues: MRPDCTDFRQLFLDDVPMMDMRAPVEFAKGAFPGVVNLPLMNDQERQKVGTCYKQQGQAAAIALGHQLVSGATKQARLEAWAAFAKAHPDGYLYCFRGGLRSQIVQGWLRDEAGIQYPRVKGGYKAMRTFLLETTQQAVEQCDFVLVGGLTGTGKTDVLHQLDNVLDLEGHANHRGSSFGKRATAQPAQIDFENQLAIDVLKKRARGIGQFVLEDEGRIVGSCTVPLELYQGMQHYPLVWLEDSFTNRVERILRDYVVNLSAEFKAVHGEEDGPRLFAERMLQSMANIYKRLGGERHQRLSEMLREALQEQQRSGAVDLHRGWIEGLLNEYYDPMYAYQRAAKAERIEFAGDAVEVREYLKARALRQPRK.

The Rhodanese domain maps to 12–136 (FLDDVPMMDM…MRTFLLETTQ (125 aa)). Catalysis depends on Cys95, which acts as the S-selanylcysteine intermediate.

The protein belongs to the SelU family. As to quaternary structure, monomer.

It catalyses the reaction 5-methylaminomethyl-2-thiouridine(34) in tRNA + selenophosphate + (2E)-geranyl diphosphate + H2O + H(+) = 5-methylaminomethyl-2-selenouridine(34) in tRNA + (2E)-thiogeraniol + phosphate + diphosphate. The catalysed reaction is 5-methylaminomethyl-2-thiouridine(34) in tRNA + (2E)-geranyl diphosphate = 5-methylaminomethyl-S-(2E)-geranyl-thiouridine(34) in tRNA + diphosphate. It carries out the reaction 5-methylaminomethyl-S-(2E)-geranyl-thiouridine(34) in tRNA + selenophosphate + H(+) = 5-methylaminomethyl-2-(Se-phospho)selenouridine(34) in tRNA + (2E)-thiogeraniol. The enzyme catalyses 5-methylaminomethyl-2-(Se-phospho)selenouridine(34) in tRNA + H2O = 5-methylaminomethyl-2-selenouridine(34) in tRNA + phosphate. Its function is as follows. Involved in the post-transcriptional modification of the uridine at the wobble position (U34) of tRNA(Lys), tRNA(Glu) and tRNA(Gln). Catalyzes the conversion of 2-thiouridine (S2U-RNA) to 2-selenouridine (Se2U-RNA). Acts in a two-step process involving geranylation of 2-thiouridine (S2U) to S-geranyl-2-thiouridine (geS2U) and subsequent selenation of the latter derivative to 2-selenouridine (Se2U) in the tRNA chain. In Pseudomonas putida (strain ATCC 47054 / DSM 6125 / CFBP 8728 / NCIMB 11950 / KT2440), this protein is tRNA 2-selenouridine synthase.